The chain runs to 203 residues: MAKAYDHLFKLLLIGDSGVGKTCLIIRFAEDSFNNTYISTIGIDFKIRTVDVEGKKIKLQVWDTAGQERFKTITTAYYRGAMGIILVYDITDEKSFENIQNWMKSIKENASAGVERLLLGNKCDMEAKRKVQKEQAIKLAREHGIRFFETSAKSSTNVDEAFSSLARDILLKSGGRRSGNSHKAPGTDLKPCDKKNTSKCSLG.

Serine 17, glycine 18, glycine 20, lysine 21, threonine 22, cysteine 23, and threonine 40 together coordinate GTP. Threonine 22 provides a ligand contact to Mg(2+). The Switch 1 signature appears at 31 to 45 (DSFNNTYISTIGIDF). A Mg(2+)-binding site is contributed by threonine 40. Residues lysine 46 and lysine 58 each participate in a glycyl lysine isopeptide (Lys-Gly) (interchain with G-Cter in ubiquitin) cross-link. Mg(2+) is bound at residue aspartate 63. A Switch 2 motif is present at residues 63 to 80 (DTAGQERFKTITTAYYRG). Positions 66, 121, 122, 124, 152, and 153 each coordinate GTP. Residues 173–203 (SGGRRSGNSHKAPGTDLKPCDKKNTSKCSLG) form a disordered region. A Phosphoserine modification is found at serine 178. The residue at position 200 (cysteine 200) is a Cysteine methyl ester. Cysteine 200 is lipidated: S-geranylgeranyl cysteine. Residues 201–203 (SLG) constitute a propeptide, removed in mature form.

Belongs to the small GTPase superfamily. Rab family. Interacts (GTP-bound form) with MICALL2; competes with RAB8A and is involved in tight junctions assembly. Interacts (GTP-bound form) with MICALL1. Interacts (GTP-bound form) with MICAL1, MICAL3, MICALCL, EHBP1 and EHBP1L1; ternary complexes of RAB8A, RAB13 and either MICAL1 or EHBP1L1 are possible. Interacts with PRKACA; downstream effector of RAB13 involved in tight junction assembly. Interacts with GRB2; may recruit RAB13 to the leading edge of migrating endothelial cells where it can activate RHOA. Interacts (isoprenylated form) with PDE6D; dissociates RAB13 from membranes. Interacts with BICDL2/BICDR2. Interacts with LEPROT and LEPROTL1. Mg(2+) serves as cofactor. Ubiquitinated via 'Lys-11'-linked ubiquitination on Lys-46 and Lys-58; impairing the recruitment of guanosine diphosphate (GDP) dissociation inhibitor 1/GDI1.

It localises to the cell membrane. The protein localises to the cytoplasmic vesicle membrane. It is found in the cell junction. Its subcellular location is the tight junction. The protein resides in the golgi apparatus. It localises to the trans-Golgi network membrane. The protein localises to the recycling endosome membrane. It is found in the cell projection. Its subcellular location is the lamellipodium. The catalysed reaction is GTP + H2O = GDP + phosphate + H(+). Regulated by guanine nucleotide exchange factors (GEFs) including DENND1C, which promote the exchange of bound GDP for free GTP. Regulated by GTPase activating proteins (GAPs) which increase the GTP hydrolysis activity. Inhibited by GDP dissociation inhibitors (GDIs). Activated in response to insulin. Its function is as follows. The small GTPases Rab are key regulators of intracellular membrane trafficking, from the formation of transport vesicles to their fusion with membranes. Rabs cycle between an inactive GDP-bound form and an active GTP-bound form that is able to recruit to membranes different sets of downstream effectors directly responsible for vesicle formation, movement, tethering and fusion. RAB13 is involved in endocytic recycling and regulates the transport to the plasma membrane of transmembrane proteins like the tight junction protein OCLN/occludin. Thereby, it regulates the assembly and the activity of tight junctions. Moreover, it may also regulate tight junction assembly by activating the PKA signaling pathway and by reorganizing the actin cytoskeleton through the activation of the downstream effectors PRKACA and MICALL2 respectively. Through its role in tight junction assembly, may play a role in the establishment of Sertoli cell barrier. Plays also a role in angiogenesis through regulation of endothelial cells chemotaxis. Also involved in neurite outgrowth. Has also been proposed to play a role in post-Golgi membrane trafficking from the TGN to the recycling endosome. Finally, it has been involved in insulin-induced transport to the plasma membrane of the glucose transporter GLUT4 and therefore may play a role in glucose homeostasis. The protein is Ras-related protein Rab-13 (RAB13) of Canis lupus familiaris (Dog).